The chain runs to 222 residues: MLEGYYIIENPGVVPSERRFRMKDLKAWGYDLHLGTIEGERAYFVSRTGEREEGETYSLQGKTYHIEKTEKEIPENARLLARIVIERGQPYLEFWLEEEDTVYPLAKEDPRIILKRLWEKEKLNQLLKHVRAVGLTTDFYKDTVFIKSIPLPYEEYPPKVRRVLREVRDIHRDIMGFGRFVFQYFGEENKTHNYRLHWTLPTLHLFDVEIANEIDKVLGMLD.

The protein belongs to the UPF0128 family.

In Pyrococcus furiosus (strain ATCC 43587 / DSM 3638 / JCM 8422 / Vc1), this protein is UPF0128 protein PF1488.